A 524-amino-acid polypeptide reads, in one-letter code: 56 kDa type-specific antigen (524 aa).

An N-terminal signal peptide occupies residues 1 to 22 (MKKIMLIASAMSALSLPFSASA). A helical transmembrane segment spans residues 67–87 (LTTGLPFGGTLAAGMTIAPGF). Disordered stretches follow at residues 112–132 (SKGEIKADSGGGTDTPIRKRF) and 387–422 (EKLAAQQEEDAKNQGEGDCKQQQGASEKSKEGKGKE). Basic and acidic residues-rich tracts occupy residues 395 to 405 (EDAKNQGEGDC) and 413 to 422 (EKSKEGKGKE). A helical transmembrane segment spans residues 472–492 (TGMVASGALGVAINAAEGVYV).

Its subcellular location is the cell membrane. May be an adherent factor for rickettsial adsorption to the host-cell surface and a determinant of virulence of individual rickettsial strain. It is the major outer membrane protein. The protein is 56 kDa type-specific antigen of Orientia tsutsugamushi (Rickettsia tsutsugamushi).